A 92-amino-acid chain; its full sequence is Small ribosomal subunit protein uS19c (92 aa).

This sequence belongs to the universal ribosomal protein uS19 family.

It is found in the plastid. The protein localises to the chloroplast. Its function is as follows. Protein S19 forms a complex with S13 that binds strongly to the 16S ribosomal RNA. The chain is Small ribosomal subunit protein uS19c from Platanus occidentalis (Sycamore).